Reading from the N-terminus, the 638-residue chain is DNA repair protein rhp41 (638 aa).

Belongs to the XPC family.

It is found in the nucleus. Functionally, has a role in the nucleotide excision repair (NER) pathway. Acts in both transcription-coupled repair (TCR) which removes damage from the transcribed strand of active genes and in global genome repair (GGR) which removes damage in untranscribed DNA. Involved in the repair of UV-induced damages where it is involved in the removal of cyclobutane pyrimidine dimers (CPDs). The chain is DNA repair protein rhp41 (rhp41) from Schizosaccharomyces pombe (strain 972 / ATCC 24843) (Fission yeast).